Reading from the N-terminus, the 163-residue chain is Probable chemoreceptor glutamine deamidase CheD (163 aa).

It belongs to the CheD family.

It catalyses the reaction L-glutaminyl-[protein] + H2O = L-glutamyl-[protein] + NH4(+). Functionally, probably deamidates glutamine residues to glutamate on methyl-accepting chemotaxis receptors (MCPs), playing an important role in chemotaxis. This Borreliella afzelii (strain PKo) (Borrelia afzelii) protein is Probable chemoreceptor glutamine deamidase CheD.